A 1580-amino-acid polypeptide reads, in one-letter code: Collagen alpha-1(XVI) chain (1580 aa).

Positions 1 to 21 (MLTSWAPGLWVLGLWATFSHG) are cleaved as a signal peptide. Asn-47 carries an N-linked (GlcNAc...) asparagine glycan. Residues 50–231 (GFNLIRRLNL…LQQAHIYCDP (182 aa)) form the Laminin G-like domain. Residues 232–374 (ELVLEEGCCE…SPDAPLQCVE (143 aa)) form a nonhelical region 10 (NC10) region. The disordered stretch occupies residues 324–547 (RESNVTLGPS…DPAPAWEGLG (224 aa)). The N-linked (GlcNAc...) asparagine glycan is linked to Asn-327. Positions 375 to 424 (GPKGEKGESGDLGPPGLPGPTGQKGQKGEKGDGGLKGLPGKPGRDGRPGE) constitute a Collagen-like 1 domain. The tract at residues 375–509 (GPKGEKGESG…PGTKGEKGDP (135 aa)) is triple-helical region 9 (COL9) with 3 imperfections. The span at 449–460 (PGPPGLPGPPGI) shows a compositional bias: pro residues. Positions 486–495 (GKEGPGGKPG) are enriched in gly residues. Positions 510-524 (CEVCPTLPEGSQNFV) are nonhelical region 9 (NC9). Residues 525–570 (GLPGKPGPKGEPGDPAPAWEGLGTVGLKGDRGDPGIQGMKGEKGEP) form a triple-helical region 8 (COL8) with 1 imperfection region. The Cell attachment site signature appears at 555 to 557 (RGD). A nonhelical region 8 (NC8) region spans residues 571–586 (CSSCSSGVGAQHLGPS). Over residues 585–598 (PSPGHGLPGLPGTS) the composition is skewed to low complexity. The interval 585–935 (PSPGHGLPGL…LPGQPGLTAE (351 aa)) is disordered. The segment at 587–640 (PGHGLPGLPGTSGIPGPRGLKGEKGSFGDTGPAGVPGSPGPVGPAGIKGAKGEP) is triple-helical region 7 (COL7) with 1 imperfection. 2 Collagen-like domains span residues 590–643 (GLPG…PCEP) and 676–725 (GLPG…PAGP). Residues 641-661 (CEPCTALSELQDGDMRVVHLP) form a nonhelical region 7 (NC7) region. Residues 662-732 (GPAGEKGEPG…AGPKGEKGDG (71 aa)) are triple-helical region 6 (COL6) with 1 imperfection. Positions 683-693 (KAGERGLKGQK) are enriched in basic and acidic residues. Residues 698–714 (NPGDPGTPGITGQPGIS) show a composition bias toward low complexity. Residues 733–747 (CTACPSLQGALTDVS) form a nonhelical region 6 (NC6) region. A triple-helical region 5 (COL5) with 3 imperfections region spans residues 748–870 (GLPGKPGPKG…RGEKGEPGEC (123 aa)). One can recognise a Collagen-like 4 domain in the interval 797–848 (GAEGPQGEPGTQGLPGTQGLPGPRGPPGSAGEKGAQGSPGPKGAIGPMGPPG). Residues 801 to 817 (PQGEPGTQGLPGTQGLP) are compositionally biased toward low complexity. Residues 871 to 881 (SCPSRGEPIFS) are nonhelical region 5 (NC5). The triple-helical region 4 (COL4) with 2 imperfections stretch occupies residues 882 to 933 (GMPGAPGLWMGSSSQPGPQGPPGVPGPPGPPGMPGLQGVPGHNGLPGQPGLT). Over residues 899–914 (PQGPPGVPGPPGPPGM) the composition is skewed to pro residues. The nonhelical region 4 (NC4) stretch occupies residues 934–967 (AELGSLPIEKHLLKSICGDCAQGQTAHPAFLLEK). Residues 968–982 (GEKGDQGIPGVPGFD) form a triple-helical region 3 (COL3) region. The nonhelical region 3 (NC3) stretch occupies residues 983-1005 (NCARCFIERERPRAEEARGDNSE). 2 disordered regions span residues 995–1405 (RAEE…LPGS) and 1445–1523 (AAAP…GYGK). Positions 1000–1002 (RGD) match the Cell attachment site motif. Residues 1006–1063 (GEPGCSGSPGLPGPPGMPGQRGEEGPPGMRGSPGPPGPIGLQGERGLTGLTGDKGEPG) form the Collagen-like 5 domain. Positions 1006 to 1409 (GEPGCSGSPG…PGLPGSMGDM (404 aa)) are triple-helical region 2 (COL2) with 2 imperfections. Residues 1098–1107 (SGPPGSEGLP) are compositionally biased toward low complexity. Composition is skewed to pro residues over residues 1139–1148 (FPGPPGPPGF) and 1178–1187 (SPGPPGPPGI). A compositionally biased stretch (basic and acidic residues) spans 1196–1205 (LDGKDGKPGL). A Cell attachment site motif is present at residues 1206–1208 (RGD). Residues 1210 to 1263 (GPAGPPGLMGPPGFKGKTGHPGLPGPKGDCGKPGPPGSSGRPGAEGEPGAMGPQ) enclose the Collagen-like 6 domain. A compositionally biased stretch (low complexity) spans 1247–1263 (SSGRPGAEGEPGAMGPQ). The span at 1265–1281 (RPGPPGHLGPPGQPGPP) shows a compositional bias: pro residues. Collagen-like domains lie at 1350-1407 (GQKG…GSMG), 1448-1500 (PGRP…GDIG), and 1504-1552 (AGEN…GKAG). Residues 1362 to 1371 (GMPGGPGKSG) are compositionally biased toward gly residues. A compositionally biased stretch (low complexity) spans 1396 to 1405 (NPGLPGLPGS). Positions 1410 to 1448 (VNYDDIKRFIRQEIIKLFDERMAYYTSRMQFPMEVAAAP) are nonhelical region 2 (NC2). Positions 1449–1554 (GRPGPPGKDG…MGQPGKAGHC (106 aa)) are triple-helical region 1 (COL1) with 2 imperfections. Positions 1555 to 1580 (NPSDCFGAMPMEQQYPPMKSMKGPFG) are nonhelical region 1 (NC1).

Belongs to the fibril-associated collagens with interrupted helices (FACIT) family. As to quaternary structure, homotrimer. Interacts with FBN1, fibronectin and integrins ITGA1/ITGB1 and ITGA2/ITGB1. Integrin ITGA1/ITGB1 binds to a unique site within COL16A1 located close to its C-terminal end between collagenous domains COL1-COL3. Prolines at the third position of the tripeptide repeating unit (G-X-Y) are hydroxylated in some or all of the chains. In terms of processing, glycosylated. Expressed in most tissues examined with highest levels of expression observed in heart. Strongly expressed in cortical and medullar regions of kidney and more weakly expressed in lung. Also detected in the ciliary muscle of the eye, on the serosa layer lining the muscularis externa of intestinal tissue, and in the perimysium membrane lining both the cardiac muscle bundle and the smooth muscle tissue of the small intestine. Strongly stained in particulate or granular structures. Not detected in brain or skeletal muscle.

It is found in the secreted. It localises to the extracellular space. The protein resides in the extracellular matrix. Its function is as follows. Involved in mediating cell attachment and inducing integrin-mediated cellular reactions, such as cell spreading and alterations in cell morphology. The protein is Collagen alpha-1(XVI) chain of Mus musculus (Mouse).